The following is a 158-amino-acid chain: S-ribosylhomocysteine lyase (158 aa).

His-56, His-60, and Cys-125 together coordinate Fe cation.

The protein belongs to the LuxS family. Homodimer. Requires Fe cation as cofactor.

It carries out the reaction S-(5-deoxy-D-ribos-5-yl)-L-homocysteine = (S)-4,5-dihydroxypentane-2,3-dione + L-homocysteine. Its function is as follows. Involved in the synthesis of autoinducer 2 (AI-2) which is secreted by bacteria and is used to communicate both the cell density and the metabolic potential of the environment. The regulation of gene expression in response to changes in cell density is called quorum sensing. Catalyzes the transformation of S-ribosylhomocysteine (RHC) to homocysteine (HC) and 4,5-dihydroxy-2,3-pentadione (DPD). This is S-ribosylhomocysteine lyase from Leuconostoc citreum (strain KM20).